Consider the following 1977-residue polypeptide: Echinoderm microtubule-associated protein-like 5 (1977 aa).

10 WD repeats span residues 59–100 (GHSD…TVSV), 104–145 (VHTH…MLSM), 148–187 (GHTD…LTPK), 195–233 (GDLQ…RTIQ), 235–273 (AHTA…TVID), 280–321 (GYKG…LIMQ), 323–362 (HCEG…LIAR), 406–445 (DRKE…KKVG), 449–488 (GSLS…EVTS), and 561–601 (GHSA…KLKD). A disordered region spans residues 609–629 (ESLAESNSDESDSDLSDVPEL). Over residues 615 to 629 (NSDESDSDLSDVPEL) the composition is skewed to acidic residues. WD repeat units follow at residues 725 to 766 (GHDD…PLSI), 770 to 811 (YHQY…KLSV), 814 to 853 (GSKD…LIGK), 861 to 900 (GKND…KTVK), 901 to 940 (AHDG…KTYA), 996 to 1035 (HMEG…CMLA), 1038 to 1077 (KLKK…DLVS), 1080 to 1120 (HRKD…RVGV), and 1236 to 1276 (AHST…HREK). Disordered regions lie at residues 1276 to 1297 (KKYC…YDSD) and 1323 to 1363 (PHLQ…NVGK). A compositionally biased stretch (acidic residues) spans 1281–1294 (SEESDIDSEEDGGY). The span at 1326–1337 (QQKEPSVDERQG) shows a compositional bias: basic and acidic residues. WD repeat units follow at residues 1420-1471 (EHND…TLSI), 1475-1516 (SHSK…KIAS), 1519-1558 (GHNQ…LLSK), 1568-1606 (ARMQ…RVVA), 1608-1654 (AHNG…RAFR), 1699-1739 (GHVD…MLNK), 1741-1782 (NLGH…GKKR), 1783-1822 (DRRC…TLNR), 1895-1934 (AEKA…KFAK), and 1940-1977 (GHSP…HMPH).

The protein belongs to the WD repeat EMAP family.

It localises to the cytoplasm. Its subcellular location is the cytoskeleton. May modify the assembly dynamics of microtubules, such that microtubules are slightly longer, but more dynamic. The chain is Echinoderm microtubule-associated protein-like 5 (Eml5) from Mus musculus (Mouse).